We begin with the raw amino-acid sequence, 591 residues long: Coiled-coil domain-containing protein 148 (591 aa).

Coiled coils occupy residues 166 to 195 (VKKQLKTVFERLRLEQQRIENDLSDWSIKI), 352 to 417 (MLAK…KKKK), and 466 to 498 (ERRLMEKKEVALQEAHEDKERARRLEALRKQVA).

The protein is Coiled-coil domain-containing protein 148 (CCDC148) of Homo sapiens (Human).